The primary structure comprises 658 residues: MTSIRTSNCASEGRRLTILYMTQTGTSSDLALRISRQAQRKRFHVTIADVCSYDPTDLVSESLMLFLVSTTGQGEFPTTSRPFWNFLLRKGIPEDILEDVTFAAFGLGDSTYPRFCWPVRLLSRRLRGLGAKELVEHGEGDDMHYLGLEGELGPWMNRFWRKLDELCPLEAGVREVGRDELLPPSVTVTKVETEEGRLKEKHDGRDALGRHLEDQGWSISILDKNQRMTATDHFQDVRLLEFVRLNQTDVEEDKRQIGENEEISRGSASALDGISIQTYRPGDILCLHPINDAASVTEMLSRLDLDADTLVSLAGSTIPSTVPQSPAHMSVRDLLTHHLDFTSVPTNSFFEQIRLFSPTGSQEREKLDEYCGIFPEEELAKGANPQDGIDEMYEYAQRPRRTIKEVLDEFKSVQVPLAYIADVLPWIKPREFSIASAPPANSEREKRVSEEPHAIQLSVAMVKYKTRLRKARTGLCTRWLSSLPLGSRVPVVIKPGYLTLPPAQAPLILIGPGTGCAPLRSLVIDRLSNSTLARSEIHLFLGFRYRTKDYLFQHDWQHLQQSYANQFHLHTAFSRDGEAKTYVQDLIVKPDNAHVLWEAITERNAWIVVAGASGKMPEQVRGAFESIARSQGGMDEEQAKRFMDALERQRRWQEECWG.

The 145-residue stretch at 16-160 folds into the Flavodoxin-like domain; the sequence is LTILYMTQTG…ELGPWMNRFW (145 aa). FMN-binding positions include 22 to 27, 69 to 72, 107 to 116, and D142; these read TQTGTS, STTG, and LGDSTYPRFC. The FAD-binding FR-type domain occupies 215-502; the sequence is QGWSISILDK…IKPGYLTLPP (288 aa). FAD contacts are provided by residues R400, 430-433, and 474-477; these read REFS and GLCT. Residues T514, 574–575, and 580–584 each bind NADP(+); these read SR and KTYVQ. W657 contributes to the FAD binding site.

It belongs to the NADPH-dependent diflavin oxidoreductase NDOR1 family. In the N-terminal section; belongs to the flavodoxin family. The protein in the C-terminal section; belongs to the flavoprotein pyridine nucleotide cytochrome reductase family. As to quaternary structure, interacts with DRE2; as part of the cytosolic iron-sulfur (Fe-S) protein assembly (CIA) machinery. FAD serves as cofactor. It depends on FMN as a cofactor.

The protein localises to the cytoplasm. It is found in the mitochondrion. It catalyses the reaction 2 oxidized [2Fe-2S]-[protein] + NADPH = 2 reduced [2Fe-2S]-[protein] + NADP(+) + H(+). Its function is as follows. NADPH-dependent reductase which is a central component of the cytosolic iron-sulfur (Fe-S) protein assembly (CIA) machinery. Transfers electrons from NADPH via its FAD and FMN prosthetic groups to the [2Fe-2S] cluster of DRE2, another key component of the CIA machinery. In turn, this reduced cluster provides electrons for assembly of cytosolic iron-sulfur cluster proteins. Positively controls H(2)O(2)-induced cell death. This is NADPH-dependent diflavin oxidoreductase 1 from Mycosarcoma maydis (Corn smut fungus).